Consider the following 509-residue polypeptide: tRNA-2-methylthio-N(6)-dimethylallyladenosine synthase (509 aa).

The segment covering 1–13 (MNEQQRLASQQAN) has biased composition (polar residues). The segment at 1-26 (MNEQQRLASQQANSSKKKEEKDYSKY) is disordered. The span at 16-25 (KKKEEKDYSK) shows a compositional bias: basic and acidic residues. Residues 66 to 184 (RKFYIRTYGC…LPYILKDAMF (119 aa)) enclose the MTTase N-terminal domain. The [4Fe-4S] cluster site is built by cysteine 75, cysteine 111, cysteine 145, cysteine 221, cysteine 225, and cysteine 228. One can recognise a Radical SAM core domain in the interval 207–437 (RRGDIKAWVN…NALVNKLAIE (231 aa)). A TRAM domain is found at 440–503 (NRYKGQIVEV…TWSLNGELVE (64 aa)).

Belongs to the methylthiotransferase family. MiaB subfamily. In terms of assembly, monomer. Requires [4Fe-4S] cluster as cofactor.

It is found in the cytoplasm. It catalyses the reaction N(6)-dimethylallyladenosine(37) in tRNA + (sulfur carrier)-SH + AH2 + 2 S-adenosyl-L-methionine = 2-methylsulfanyl-N(6)-dimethylallyladenosine(37) in tRNA + (sulfur carrier)-H + 5'-deoxyadenosine + L-methionine + A + S-adenosyl-L-homocysteine + 2 H(+). Catalyzes the methylthiolation of N6-(dimethylallyl)adenosine (i(6)A), leading to the formation of 2-methylthio-N6-(dimethylallyl)adenosine (ms(2)i(6)A) at position 37 in tRNAs that read codons beginning with uridine. This chain is tRNA-2-methylthio-N(6)-dimethylallyladenosine synthase, found in Bacillus cereus (strain ATCC 10987 / NRS 248).